Here is a 565-residue protein sequence, read N- to C-terminus: Granule-bound starch synthase 1b, chloroplastic/amyloplastic (565 aa).

Residues valine 1 to cysteine 34 constitute a chloroplast transit peptide. Residue lysine 52 coordinates ADP-alpha-D-glucose.

Belongs to the glycosyltransferase 1 family. Bacterial/plant glycogen synthase subfamily.

It is found in the plastid. It localises to the chloroplast. Its subcellular location is the amyloplast. It carries out the reaction an NDP-alpha-D-glucose + [(1-&gt;4)-alpha-D-glucosyl](n) = [(1-&gt;4)-alpha-D-glucosyl](n+1) + a ribonucleoside 5'-diphosphate + H(+). It participates in glycan biosynthesis; starch biosynthesis. Functionally, involved in the synthesis of amylose in endosperm. This is Granule-bound starch synthase 1b, chloroplastic/amyloplastic from Hordeum vulgare (Barley).